The following is a 246-amino-acid chain: UDP-N-acetyl-D-mannosaminuronic acid transferase (246 aa).

Belongs to the glycosyltransferase 26 family.

It catalyses the reaction UDP-N-acetyl-alpha-D-mannosaminouronate + N-acetyl-alpha-D-glucosaminyl-di-trans,octa-cis-undecaprenyl diphosphate = beta-D-ManNAcA-(1-&gt;4)-alpha-D-GlcNAc-di-trans,octa-cis-undecaprenyl diphosphate + UDP + H(+). The protein operates within bacterial outer membrane biogenesis; enterobacterial common antigen biosynthesis. Its function is as follows. Catalyzes the synthesis of Und-PP-GlcNAc-ManNAcA (Lipid II), the second lipid-linked intermediate involved in enterobacterial common antigen (ECA) synthesis. This is UDP-N-acetyl-D-mannosaminuronic acid transferase from Salmonella agona (strain SL483).